Consider the following 480-residue polypeptide: Glutamate--tRNA ligase (480 aa).

Residues 9–19 (PSPTGNLHIGT) carry the 'HIGH' region motif. The short motif at 247–251 (KLSKR) is the 'KMSKS' region element. An ATP-binding site is contributed by lysine 250.

Belongs to the class-I aminoacyl-tRNA synthetase family. Glutamate--tRNA ligase type 1 subfamily. As to quaternary structure, monomer.

The protein resides in the cytoplasm. It catalyses the reaction tRNA(Glu) + L-glutamate + ATP = L-glutamyl-tRNA(Glu) + AMP + diphosphate. In terms of biological role, catalyzes the attachment of glutamate to tRNA(Glu) in a two-step reaction: glutamate is first activated by ATP to form Glu-AMP and then transferred to the acceptor end of tRNA(Glu). This is Glutamate--tRNA ligase from Nostoc sp. (strain PCC 7120 / SAG 25.82 / UTEX 2576).